Consider the following 725-residue polypeptide: Malate synthase G 2 (725 aa).

Acetyl-CoA-binding positions include Val-118, 125-126, Ser-276, and Arg-313; that span reads RY. The Proton acceptor role is filled by Arg-340. Glyoxylate contacts are provided by residues Arg-340, Glu-429, and 454 to 457; that span reads GFLD. Mg(2+)-binding residues include Glu-429 and Asp-457. Pro-538 lines the acetyl-CoA pocket. Cysteine sulfenic acid (-SOH) is present on Cys-619. Catalysis depends on Asp-633, which acts as the Proton donor.

Belongs to the malate synthase family. GlcB subfamily. As to quaternary structure, monomer. The cofactor is Mg(2+).

It is found in the cytoplasm. It catalyses the reaction glyoxylate + acetyl-CoA + H2O = (S)-malate + CoA + H(+). Its pathway is carbohydrate metabolism; glyoxylate cycle; (S)-malate from isocitrate: step 2/2. Involved in the glycolate utilization. Catalyzes the condensation and subsequent hydrolysis of acetyl-coenzyme A (acetyl-CoA) and glyoxylate to form malate and CoA. The protein is Malate synthase G 2 of Pseudomonas syringae pv. tomato (strain ATCC BAA-871 / DC3000).